A 102-amino-acid polypeptide reads, in one-letter code: MILSLSHFLIVAAMLFTIGVAGIILNRKNIIVVLMSVELILLSVNINLVSFSSFFGDLTGQVFSLFVLTVAAAEAAIGLAILVAYYRNRGSIAVEDINMMKG.

The next 3 membrane-spanning stretches (helical) occupy residues 5–25, 30–50, and 62–82; these read LSHF…GIIL, IIVV…NLVS, and VFSL…LAIL.

It belongs to the complex I subunit 4L family. In terms of assembly, NDH-1 is composed of 14 different subunits. Subunits NuoA, H, J, K, L, M, N constitute the membrane sector of the complex.

It localises to the cell inner membrane. The enzyme catalyses a quinone + NADH + 5 H(+)(in) = a quinol + NAD(+) + 4 H(+)(out). Functionally, NDH-1 shuttles electrons from NADH, via FMN and iron-sulfur (Fe-S) centers, to quinones in the respiratory chain. The immediate electron acceptor for the enzyme in this species is believed to be ubiquinone. Couples the redox reaction to proton translocation (for every two electrons transferred, four hydrogen ions are translocated across the cytoplasmic membrane), and thus conserves the redox energy in a proton gradient. The sequence is that of NADH-quinone oxidoreductase subunit K from Methylocella silvestris (strain DSM 15510 / CIP 108128 / LMG 27833 / NCIMB 13906 / BL2).